The chain runs to 210 residues: Imidazole glycerol phosphate synthase subunit HisH (210 aa).

The region spanning 1 to 210 is the Glutamine amidotransferase type-1 domain; that stretch reads MIAILDYGMG…KLLENFIRFI (210 aa). Catalysis depends on cysteine 79, which acts as the Nucleophile. Residues histidine 191 and glutamate 193 contribute to the active site.

Heterodimer of HisH and HisF.

It is found in the cytoplasm. It catalyses the reaction 5-[(5-phospho-1-deoxy-D-ribulos-1-ylimino)methylamino]-1-(5-phospho-beta-D-ribosyl)imidazole-4-carboxamide + L-glutamine = D-erythro-1-(imidazol-4-yl)glycerol 3-phosphate + 5-amino-1-(5-phospho-beta-D-ribosyl)imidazole-4-carboxamide + L-glutamate + H(+). The catalysed reaction is L-glutamine + H2O = L-glutamate + NH4(+). Its pathway is amino-acid biosynthesis; L-histidine biosynthesis; L-histidine from 5-phospho-alpha-D-ribose 1-diphosphate: step 5/9. Functionally, IGPS catalyzes the conversion of PRFAR and glutamine to IGP, AICAR and glutamate. The HisH subunit catalyzes the hydrolysis of glutamine to glutamate and ammonia as part of the synthesis of IGP and AICAR. The resulting ammonia molecule is channeled to the active site of HisF. The protein is Imidazole glycerol phosphate synthase subunit HisH of Leptospira interrogans serogroup Icterohaemorrhagiae serovar copenhageni (strain Fiocruz L1-130).